Reading from the N-terminus, the 92-residue chain is Small ribosomal subunit protein uS19 (92 aa).

This sequence belongs to the universal ribosomal protein uS19 family.

Functionally, protein S19 forms a complex with S13 that binds strongly to the 16S ribosomal RNA. This Leptospira biflexa serovar Patoc (strain Patoc 1 / Ames) protein is Small ribosomal subunit protein uS19.